The primary structure comprises 100 residues: Replication restart protein PriB (100 aa).

Residues 1–100 (MTNRIELSGV…VLHADKISQI (100 aa)) enclose the SSB domain.

The protein belongs to the PriB family. As to quaternary structure, homodimer. Interacts with PriA and DnaT. Component of the replication restart primosome. Primosome assembly occurs via a 'hand-off' mechanism. PriA binds to replication forks, subsequently PriB then DnaT bind; DnaT then displaces ssDNA to generate the helicase loading substrate.

Its function is as follows. Involved in the restart of stalled replication forks, which reloads the replicative helicase on sites other than the origin of replication; the PriA-PriB pathway is the major replication restart pathway. During primosome assembly it facilitates complex formation between PriA and DnaT on DNA; stabilizes PriA on DNA. Stimulates the DNA unwinding activity of PriA helicase. The chain is Replication restart protein PriB from Vibrio cholerae serotype O1 (strain ATCC 39315 / El Tor Inaba N16961).